We begin with the raw amino-acid sequence, 1116 residues long: uncharacterized protein (1116 aa).

A helical membrane pass occupies residues 3–20 (FFLTFLLFLFTLFSLFVY).

The protein localises to the membrane. This is an uncharacterized protein from Aquifex aeolicus (strain VF5).